A 267-amino-acid chain; its full sequence is Glutamate 5-kinase (267 aa).

Lysine 14 provides a ligand contact to ATP. Positions 54, 141, and 157 each coordinate substrate. ATP-binding positions include 177–178 and 219–225; these read SD and TGGMMSK.

The protein belongs to the glutamate 5-kinase family.

Its subcellular location is the cytoplasm. The enzyme catalyses L-glutamate + ATP = L-glutamyl 5-phosphate + ADP. The protein operates within amino-acid biosynthesis; L-proline biosynthesis; L-glutamate 5-semialdehyde from L-glutamate: step 1/2. In terms of biological role, catalyzes the transfer of a phosphate group to glutamate to form L-glutamate 5-phosphate. The protein is Glutamate 5-kinase of Streptococcus thermophilus.